The sequence spans 778 residues: Subtilisin-like protease SBT5.4 (778 aa).

Positions 1–35 (MSMTRRYSSTQYSNKMSLQSLSSLLLLVTLFFSPA) are cleaved as a signal peptide. An Inhibitor I9 domain is found at 41–126 (SYIVYLGSHA…VFPNKGRKLH (86 aa)). The Peptidase S8 domain occupies 130–634 (SWNFMLLAKN…SGHVQPNKAA (505 aa)). The Charge relay system role is filled by Asp-163. Asn-218 carries N-linked (GlcNAc...) asparagine glycosylation. The active-site Charge relay system is the His-230. N-linked (GlcNAc...) asparagine glycosylation is found at Asn-253 and Asn-404. The PA domain maps to 401-486 (ANGNVTDALL…KDGETLFSYL (86 aa)). Ser-567 functions as the Charge relay system in the catalytic mechanism. N-linked (GlcNAc...) asparagine glycosylation is found at Asn-657, Asn-690, and Asn-732.

Belongs to the peptidase S8 family. In terms of tissue distribution, expressed in the vasculature of roots and leaves, stomata, sepals, stigma, anthers and siliques.

It is found in the endoplasmic reticulum. The protein resides in the cell membrane. Its function is as follows. Serine protease. Has a substrate preference for the hydrophobic residues Phe and Ala and the basic residue Asp in the P1 position, and for Asp, Leu or Ala in the P1' position. Interferes with CLAVATA 3 (CLV3) signaling, but does not cleave CLV3. The polypeptide is Subtilisin-like protease SBT5.4 (Arabidopsis thaliana (Mouse-ear cress)).